A 133-amino-acid chain; its full sequence is Ribosome-binding factor A (133 aa).

It belongs to the RbfA family. Monomer. Binds 30S ribosomal subunits, but not 50S ribosomal subunits or 70S ribosomes.

It is found in the cytoplasm. One of several proteins that assist in the late maturation steps of the functional core of the 30S ribosomal subunit. Associates with free 30S ribosomal subunits (but not with 30S subunits that are part of 70S ribosomes or polysomes). Required for efficient processing of 16S rRNA. May interact with the 5'-terminal helix region of 16S rRNA. The sequence is that of Ribosome-binding factor A from Enterobacter sp. (strain 638).